Here is a 480-residue protein sequence, read N- to C-terminus: Protein nucleotidyltransferase YdiU (480 aa).

ATP contacts are provided by Gly86, Gly88, Arg89, Lys109, Asp121, Gly122, Arg172, and Arg179. The Proton acceptor role is filled by Asp248. The Mg(2+) site is built by Asn249 and Asp258. Asp258 contacts ATP.

This sequence belongs to the SELO family. Requires Mg(2+) as cofactor. It depends on Mn(2+) as a cofactor.

The enzyme catalyses L-seryl-[protein] + ATP = 3-O-(5'-adenylyl)-L-seryl-[protein] + diphosphate. It carries out the reaction L-threonyl-[protein] + ATP = 3-O-(5'-adenylyl)-L-threonyl-[protein] + diphosphate. The catalysed reaction is L-tyrosyl-[protein] + ATP = O-(5'-adenylyl)-L-tyrosyl-[protein] + diphosphate. It catalyses the reaction L-histidyl-[protein] + UTP = N(tele)-(5'-uridylyl)-L-histidyl-[protein] + diphosphate. The enzyme catalyses L-seryl-[protein] + UTP = O-(5'-uridylyl)-L-seryl-[protein] + diphosphate. It carries out the reaction L-tyrosyl-[protein] + UTP = O-(5'-uridylyl)-L-tyrosyl-[protein] + diphosphate. Nucleotidyltransferase involved in the post-translational modification of proteins. It can catalyze the addition of adenosine monophosphate (AMP) or uridine monophosphate (UMP) to a protein, resulting in modifications known as AMPylation and UMPylation. This Salmonella schwarzengrund (strain CVM19633) protein is Protein nucleotidyltransferase YdiU.